The primary structure comprises 535 residues: MPNKYIVVTGGVLSSVGKGTLVASIGMLLKRRGYNVTAVKIDPYINVDAGTMNPYMHGEVFVTEDGAETDLDLGHYERFMDVNMTKYNNITAGKVYFEVIKKEREGKYLGQTVQIIPHVTDQIKDMIRYASKINNAEITLVEIGGTVGDIESLPFLEAVRQLKLEEGEDNVIFVHIALVEYLSVTGELKTKPLQHSVQELRRIGIQPDFIVGRATLPLDDETRRKIALFTNVKVDHIVSSYDVETSYEVPIILESQKLVSKILSRLKLEDRQVDLTDWISFVNNIKGINSKKTINIALVGKYTKLKDSYISIKEAIYHASAYIGVRPKLIWIESTDLESDTKNLNEILGNVNGIIVLPGFGSRGAEGKIKAIKYAREHNIPFLGICFGFQLSIVEFARDVLGLSEANSTEINPNTKDPVITLLDEQKNVTQLGGTMRLGAQKIILKEGTIAYQLYGKKVVYERHRHRYEVNPKYVDILEDAGLVVSGISENGLVEIIELPSNKFFVATQAHPEFKSRPTNPSPIYLGFIRAVASL.

The segment at M1–L268 is amidoligase domain. Position 14 (S14) interacts with CTP. S14 contributes to the UTP binding site. S15–T20 contributes to the ATP binding site. Y55 contributes to the L-glutamine binding site. Residue D72 participates in ATP binding. D72 and E142 together coordinate Mg(2+). CTP contacts are provided by residues D149–E151, K189–Q194, and K225. Residues K189–Q194 and K225 each bind UTP. Position 243 (V243) interacts with ATP. The 234-residue stretch at Y302–L535 folds into the Glutamine amidotransferase type-1 domain. Position 359 (G359) interacts with L-glutamine. The active-site Nucleophile; for glutamine hydrolysis is the C386. L-glutamine is bound by residues F387–Q390, E410, and R467. Catalysis depends on residues H511 and E513.

This sequence belongs to the CTP synthase family. Homotetramer in the presence of ATP and UTP. The enzyme dissociates into homodimers in the absence of substrate nucleotides.

It carries out the reaction UTP + L-glutamine + ATP + H2O = CTP + L-glutamate + ADP + phosphate + 2 H(+). The catalysed reaction is L-glutamine + H2O = L-glutamate + NH4(+). It catalyses the reaction UTP + NH4(+) + ATP = CTP + ADP + phosphate + 2 H(+). Its pathway is pyrimidine metabolism; CTP biosynthesis via de novo pathway; CTP from UDP: step 2/2. Allosterically activated by GTP, when glutamine is the substrate; GTP has no effect on the reaction when ammonia is the substrate. The allosteric effector GTP functions by stabilizing the protein conformation that binds the tetrahedral intermediate(s) formed during glutamine hydrolysis. Inhibited by the product CTP, via allosteric rather than competitive inhibition. In terms of biological role, catalyzes the ATP-dependent amination of UTP to CTP with either L-glutamine or ammonia as the source of nitrogen. Regulates intracellular CTP levels through interactions with the four ribonucleotide triphosphates. The chain is CTP synthase from Saccharolobus solfataricus (strain ATCC 35092 / DSM 1617 / JCM 11322 / P2) (Sulfolobus solfataricus).